The primary structure comprises 139 residues: MKKGTVLNADISAVISRLGHTDTLVVCDAGLPVPRSSTRIDMALTQGVPSFMQVLEVVTTEMQVEAAVIAEEIKTHNPQLHATLLTHLEQLQQHQGNTIEIRYTSHEQFKKQTADSQAVIRSGECSPFANIILCAGVTF.

His-20 functions as the Proton donor in the catalytic mechanism. Residues Asp-28, His-106, and 128–130 each bind substrate; that span reads FAN.

It belongs to the RbsD / FucU family. RbsD subfamily. As to quaternary structure, homodecamer.

Its subcellular location is the cytoplasm. The catalysed reaction is beta-D-ribopyranose = beta-D-ribofuranose. The protein operates within carbohydrate metabolism; D-ribose degradation; D-ribose 5-phosphate from beta-D-ribopyranose: step 1/2. In terms of biological role, catalyzes the interconversion of beta-pyran and beta-furan forms of D-ribose. This chain is D-ribose pyranase, found in Klebsiella pneumoniae (strain 342).